The following is a 563-amino-acid chain: Serine/threonine-protein kinase WNK8 (563 aa).

One can recognise a Protein kinase domain in the interval 29 to 286 (IRYDDVLGRG…ALELSKDPFL (258 aa)). Residues 109–112 (TELF) and Lys-159 contribute to the ATP site. Asp-176 acts as the Proton acceptor in catalysis. Over residues 426–436 (TSSHHNQNSPR) the composition is skewed to polar residues. A disordered region spans residues 426–459 (TSSHHNQNSPRLTHEDHEAANQQTVNSKDEEAAG). Ser-509 is subject to Phosphoserine.

Belongs to the protein kinase superfamily. Ser/Thr protein kinase family. WNK subfamily. As to quaternary structure, interacts with RGS1 and GB1, but not with GPA1. The association with RGS1 at the plasma membrane is triggered by induction of glucose. Binds to EDM2 in nucleus. Post-translationally, autophosphorylated.

The protein localises to the nucleus. It carries out the reaction L-seryl-[protein] + ATP = O-phospho-L-seryl-[protein] + ADP + H(+). The enzyme catalyses L-threonyl-[protein] + ATP = O-phospho-L-threonyl-[protein] + ADP + H(+). Functionally, regulates flowering time by modulating the photoperiod pathway. Phosphorylates the vacuolar ATPase subunit C (VATC) and RGS1. Regulates EDM2 that, in turn, modulates development processes. The chain is Serine/threonine-protein kinase WNK8 (WNK8) from Arabidopsis thaliana (Mouse-ear cress).